Reading from the N-terminus, the 298-residue chain is ATP synthase gamma chain (298 aa).

This sequence belongs to the ATPase gamma chain family. In terms of assembly, F-type ATPases have 2 components, CF(1) - the catalytic core - and CF(0) - the membrane proton channel. CF(1) has five subunits: alpha(3), beta(3), gamma(1), delta(1), epsilon(1). CF(0) has three main subunits: a, b and c.

It localises to the cell membrane. Its function is as follows. Produces ATP from ADP in the presence of a proton gradient across the membrane. The gamma chain is believed to be important in regulating ATPase activity and the flow of protons through the CF(0) complex. This chain is ATP synthase gamma chain, found in Frankia casuarinae (strain DSM 45818 / CECT 9043 / HFP020203 / CcI3).